The following is a 124-amino-acid chain: ATP synthase epsilon chain (124 aa).

The protein belongs to the ATPase epsilon chain family. In terms of assembly, F-type ATPases have 2 components, CF(1) - the catalytic core - and CF(0) - the membrane proton channel. CF(1) has five subunits: alpha(3), beta(3), gamma(1), delta(1), epsilon(1). CF(0) has three main subunits: a, b and c.

The protein localises to the cell membrane. Functionally, produces ATP from ADP in the presence of a proton gradient across the membrane. The chain is ATP synthase epsilon chain from Streptomyces griseus subsp. griseus (strain JCM 4626 / CBS 651.72 / NBRC 13350 / KCC S-0626 / ISP 5235).